The primary structure comprises 337 residues: Fructose-1,6-bisphosphatase class 1 (337 aa).

Mg(2+) is bound by residues Glu94, Asp116, Leu118, and Asp119. Residues 119–122, Asn210, and Lys276 contribute to the substrate site; that span reads DGSS. Glu282 contacts Mg(2+).

This sequence belongs to the FBPase class 1 family. Homotetramer. Requires Mg(2+) as cofactor.

The protein resides in the cytoplasm. It carries out the reaction beta-D-fructose 1,6-bisphosphate + H2O = beta-D-fructose 6-phosphate + phosphate. The protein operates within carbohydrate biosynthesis; gluconeogenesis. This chain is Fructose-1,6-bisphosphatase class 1, found in Burkholderia vietnamiensis (strain G4 / LMG 22486) (Burkholderia cepacia (strain R1808)).